A 177-amino-acid polypeptide reads, in one-letter code: Nucleoside triphosphate/diphosphate phosphatase (177 aa).

R23 acts as the Proton donor in catalysis. Mg(2+) contacts are provided by N87, D103, D105, D107, D120, and E123.

It belongs to the Ntdp family. The cofactor is Mg(2+).

The catalysed reaction is a ribonucleoside 5'-triphosphate + H2O = a ribonucleoside 5'-diphosphate + phosphate + H(+). It catalyses the reaction a ribonucleoside 5'-diphosphate + H2O = a ribonucleoside 5'-phosphate + phosphate + H(+). Its function is as follows. Has nucleoside phosphatase activity towards nucleoside triphosphates and nucleoside diphosphates. The polypeptide is Nucleoside triphosphate/diphosphate phosphatase (Streptococcus pyogenes serotype M1).